The primary structure comprises 492 residues: N-succinylglutamate 5-semialdehyde dehydrogenase (492 aa).

220-225 is a binding site for NAD(+); sequence GSANTG. Catalysis depends on residues E243 and C277.

The protein belongs to the aldehyde dehydrogenase family. AstD subfamily.

The catalysed reaction is N-succinyl-L-glutamate 5-semialdehyde + NAD(+) + H2O = N-succinyl-L-glutamate + NADH + 2 H(+). It functions in the pathway amino-acid degradation; L-arginine degradation via AST pathway; L-glutamate and succinate from L-arginine: step 4/5. Catalyzes the NAD-dependent reduction of succinylglutamate semialdehyde into succinylglutamate. The polypeptide is N-succinylglutamate 5-semialdehyde dehydrogenase (Escherichia coli O81 (strain ED1a)).